Here is a 374-residue protein sequence, read N- to C-terminus: Aminomethyltransferase (374 aa).

Belongs to the GcvT family. As to quaternary structure, the glycine cleavage system is composed of four proteins: P, T, L and H.

It carries out the reaction N(6)-[(R)-S(8)-aminomethyldihydrolipoyl]-L-lysyl-[protein] + (6S)-5,6,7,8-tetrahydrofolate = N(6)-[(R)-dihydrolipoyl]-L-lysyl-[protein] + (6R)-5,10-methylene-5,6,7,8-tetrahydrofolate + NH4(+). Functionally, the glycine cleavage system catalyzes the degradation of glycine. In Prochlorococcus marinus (strain MIT 9313), this protein is Aminomethyltransferase.